The sequence spans 539 residues: Chaperonin GroEL 2 (539 aa).

Residues 29 to 32 (TLGP), 86 to 90 (DGTTT), Gly413, 477 to 479 (NAA), and Asp493 each bind ATP. Residues 519–539 (VVDKPEEEDSAAAGHGHGHSH) are disordered.

The protein belongs to the chaperonin (HSP60) family. As to quaternary structure, forms a cylinder of 14 subunits composed of two heptameric rings stacked back-to-back. Interacts with the co-chaperonin GroES.

It is found in the cytoplasm. The catalysed reaction is ATP + H2O + a folded polypeptide = ADP + phosphate + an unfolded polypeptide.. Functionally, together with its co-chaperonin GroES, plays an essential role in assisting protein folding. The GroEL-GroES system forms a nano-cage that allows encapsulation of the non-native substrate proteins and provides a physical environment optimized to promote and accelerate protein folding. The sequence is that of Chaperonin GroEL 2 from Saccharopolyspora erythraea (strain ATCC 11635 / DSM 40517 / JCM 4748 / NBRC 13426 / NCIMB 8594 / NRRL 2338).